A 96-amino-acid chain; its full sequence is UPF0235 protein CKO_04329 (96 aa).

The protein belongs to the UPF0235 family.

The protein is UPF0235 protein CKO_04329 of Citrobacter koseri (strain ATCC BAA-895 / CDC 4225-83 / SGSC4696).